A 395-amino-acid polypeptide reads, in one-letter code: Chorismate synthase (395 aa).

Residue arginine 48 coordinates NADP(+). An FMN-binding site is contributed by 125-127; that stretch reads RSS. The tract at residues 264–292 is disordered; that stretch reads RNEDWTFDDGESFDHVESEEGDPVPVGND. Residues glycine 298, 313–317, and arginine 340 contribute to the FMN site; that span reads HAPTS. The segment at 373-395 is disordered; it reads PDRVDGNPGQYDTDYHPSSPDND.

It belongs to the chorismate synthase family. The cofactor is FMNH2.

It catalyses the reaction 5-O-(1-carboxyvinyl)-3-phosphoshikimate = chorismate + phosphate. It functions in the pathway metabolic intermediate biosynthesis; chorismate biosynthesis; chorismate from D-erythrose 4-phosphate and phosphoenolpyruvate: step 7/7. In terms of biological role, catalyzes the anti-1,4-elimination of the C-3 phosphate and the C-6 proR hydrogen from 5-enolpyruvylshikimate-3-phosphate (EPSP) to yield chorismate, which is the branch point compound that serves as the starting substrate for the three terminal pathways of aromatic amino acid biosynthesis. This reaction introduces a second double bond into the aromatic ring system. The chain is Chorismate synthase from Halorubrum lacusprofundi (strain ATCC 49239 / DSM 5036 / JCM 8891 / ACAM 34).